The chain runs to 275 residues: Thiazole synthase (275 aa).

Catalysis depends on Lys-116, which acts as the Schiff-base intermediate with DXP. 1-deoxy-D-xylulose 5-phosphate is bound by residues Gly-177, 203–204 (AG), and 225–226 (NT).

This sequence belongs to the ThiG family. In terms of assembly, homotetramer. Forms heterodimers with either ThiH or ThiS.

It localises to the cytoplasm. The enzyme catalyses [ThiS sulfur-carrier protein]-C-terminal-Gly-aminoethanethioate + 2-iminoacetate + 1-deoxy-D-xylulose 5-phosphate = [ThiS sulfur-carrier protein]-C-terminal Gly-Gly + 2-[(2R,5Z)-2-carboxy-4-methylthiazol-5(2H)-ylidene]ethyl phosphate + 2 H2O + H(+). Its pathway is cofactor biosynthesis; thiamine diphosphate biosynthesis. Functionally, catalyzes the rearrangement of 1-deoxy-D-xylulose 5-phosphate (DXP) to produce the thiazole phosphate moiety of thiamine. Sulfur is provided by the thiocarboxylate moiety of the carrier protein ThiS. In vitro, sulfur can be provided by H(2)S. The sequence is that of Thiazole synthase from Acaryochloris marina (strain MBIC 11017).